The chain runs to 371 residues: Queuine tRNA-ribosyltransferase (371 aa).

Aspartate 90 (proton acceptor) is an active-site residue. Substrate is bound by residues 90 to 94 (DSGGF), aspartate 144, glutamine 188, and glycine 215. Positions 246 to 252 (GVGTPED) are RNA binding. The active-site Nucleophile is aspartate 265. Residues 270 to 274 (TRNAR) are RNA binding; important for wobble base 34 recognition. Cysteine 303, cysteine 305, cysteine 308, and histidine 334 together coordinate Zn(2+).

The protein belongs to the queuine tRNA-ribosyltransferase family. Homodimer. Within each dimer, one monomer is responsible for RNA recognition and catalysis, while the other monomer binds to the replacement base PreQ1. The cofactor is Zn(2+).

It catalyses the reaction 7-aminomethyl-7-carbaguanine + guanosine(34) in tRNA = 7-aminomethyl-7-carbaguanosine(34) in tRNA + guanine. It participates in tRNA modification; tRNA-queuosine biosynthesis. Its function is as follows. Catalyzes the base-exchange of a guanine (G) residue with the queuine precursor 7-aminomethyl-7-deazaguanine (PreQ1) at position 34 (anticodon wobble position) in tRNAs with GU(N) anticodons (tRNA-Asp, -Asn, -His and -Tyr). Catalysis occurs through a double-displacement mechanism. The nucleophile active site attacks the C1' of nucleotide 34 to detach the guanine base from the RNA, forming a covalent enzyme-RNA intermediate. The proton acceptor active site deprotonates the incoming PreQ1, allowing a nucleophilic attack on the C1' of the ribose to form the product. After dissociation, two additional enzymatic reactions on the tRNA convert PreQ1 to queuine (Q), resulting in the hypermodified nucleoside queuosine (7-(((4,5-cis-dihydroxy-2-cyclopenten-1-yl)amino)methyl)-7-deazaguanosine). The chain is Queuine tRNA-ribosyltransferase from Neisseria gonorrhoeae (strain NCCP11945).